Reading from the N-terminus, the 278-residue chain is Acetyl-coenzyme A carboxylase carboxyl transferase subunit beta (278 aa).

Residues 23-278 form the CoA carboxyltransferase N-terminal domain; it reads LWSKCDSCGA…QLIKLLGHMK (256 aa). Zn(2+) contacts are provided by Cys-27, Cys-30, Cys-46, and Cys-49. The C4-type zinc finger occupies 27 to 49; it reads CDSCGAALHKKQLEDHLYTCPHC.

Belongs to the AccD/PCCB family. Acetyl-CoA carboxylase is a heterohexamer composed of biotin carboxyl carrier protein (AccB), biotin carboxylase (AccC) and two subunits each of ACCase subunit alpha (AccA) and ACCase subunit beta (AccD). The cofactor is Zn(2+).

It is found in the cytoplasm. It catalyses the reaction N(6)-carboxybiotinyl-L-lysyl-[protein] + acetyl-CoA = N(6)-biotinyl-L-lysyl-[protein] + malonyl-CoA. It participates in lipid metabolism; malonyl-CoA biosynthesis; malonyl-CoA from acetyl-CoA: step 1/1. Its function is as follows. Component of the acetyl coenzyme A carboxylase (ACC) complex. Biotin carboxylase (BC) catalyzes the carboxylation of biotin on its carrier protein (BCCP) and then the CO(2) group is transferred by the transcarboxylase to acetyl-CoA to form malonyl-CoA. This is Acetyl-coenzyme A carboxylase carboxyl transferase subunit beta from Chlorobaculum tepidum (strain ATCC 49652 / DSM 12025 / NBRC 103806 / TLS) (Chlorobium tepidum).